A 242-amino-acid polypeptide reads, in one-letter code: Prosalusin (242 aa).

The N-terminal stretch at 1–26 (MAAATRGCRPWGSLLGLLGLVSAAAA) is a signal peptide. Residues 27-189 (AWDLASLRCT…SSWVVYGTNY (163 aa)) constitute a propeptide that is removed on maturation. 93–100 (GWTGTGKS) lines the ATP pocket. A glycan (N-linked (GlcNAc...) asparagine) is linked at N149. The segment at 210-242 (PPRRSGALPPAPAAPRPALRAQRAGPAGPGAKG) is disordered. Over residues 225-235 (RPALRAQRAGP) the composition is skewed to low complexity. Position 241 is a lysine amide (K241).

The protein belongs to the ClpA/ClpB family. Torsin subfamily. Post-translationally, amidation of salusin-alpha(29-Gly) by peptidylglycine alpha-amidating monooxygenase, PAM, converts Lys-241-Gly-242 to Lys-241-NH2 and gives raise to salusin-alpha. In terms of tissue distribution, isoform 4 is ubiquitously expressed, with high level in vascular endothelial cells and vascular smooth muscle cells.

It localises to the secreted. Its function is as follows. Salusins -alpha and -beta may be endocrine and/or paracrine factors able to increase intracellular calcium concentrations and induce cell mitogenesis. Salusins may also be potent hypotensive peptides. The protein is Prosalusin (TOR2A) of Homo sapiens (Human).